The chain runs to 505 residues: Glutamate--tRNA ligase (505 aa).

The 'HIGH' region signature appears at 12 to 22; it reads PSPTGDPHVGT. Residues 253-257 carry the 'KMSKS' region motif; sequence KLSKR. K256 serves as a coordination point for ATP.

It belongs to the class-I aminoacyl-tRNA synthetase family. Glutamate--tRNA ligase type 1 subfamily. Monomer.

The protein localises to the cytoplasm. It carries out the reaction tRNA(Glu) + L-glutamate + ATP = L-glutamyl-tRNA(Glu) + AMP + diphosphate. Its function is as follows. Catalyzes the attachment of glutamate to tRNA(Glu) in a two-step reaction: glutamate is first activated by ATP to form Glu-AMP and then transferred to the acceptor end of tRNA(Glu). The chain is Glutamate--tRNA ligase from Chlamydophila psittaci (strain ATCC VR-125 / 6BC) (Chlamydia psittaci).